The primary structure comprises 357 residues: MTRPTLRETVARLAPGTGLRDGLERILRGRTGALIVLGNDENVEAICDGGFALDVRYAPTRLRELAKMDGAVVLSTDGSRIVRANVQLVPDPSIATDESGTRHRSAERAAIQTGYPVISVSHSMNIVTVYVGGERHVVADSATILSRANQAIATLERYKIRLDEVSRQLSRAEIEDFVTLRDVLTVVQRLELVRRIGQVIDNDVVELGTDGRQLRLQLDELLGGNDNARELIVRDYHASPEPLSEAQMTATLDELDALSDTELLDFTALAKVFGYPTTTEAQDSAVSPRGYRALAGIPRLQFAHADLLVRSFGTLQNVLAASASDLQSIDGIGAMWARHVREGLSQLAESTITDSLS.

Positions 3 to 141 constitute a DAC domain; the sequence is RPTLRETVAR…GGERHVVADS (139 aa). ATP is bound by residues glycine 70, leucine 88, and 101–105; that span reads TRHRS.

It belongs to the DisA family. Homooctamer. The cofactor is Mg(2+).

The enzyme catalyses 2 ATP = 3',3'-c-di-AMP + 2 diphosphate. In terms of biological role, participates in a DNA-damage check-point. DisA forms globular foci that rapidly scan along the chromosomes searching for lesions. Also has diadenylate cyclase activity, catalyzing the condensation of 2 ATP molecules into cyclic di-AMP (c-di-AMP). c-di-AMP likely acts as a signaling molecule that may couple DNA integrity with a cellular process. The sequence is that of DNA integrity scanning protein DisA from Mycobacterium avium (strain 104).